The sequence spans 105 residues: UPF0473 protein SAK_2028 (105 aa).

Belongs to the UPF0473 family.

The chain is UPF0473 protein SAK_2028 from Streptococcus agalactiae serotype Ia (strain ATCC 27591 / A909 / CDC SS700).